The following is a 205-amino-acid chain: Dephospho-CoA kinase (205 aa).

Residues 5-201 (VVGLTGGIGS…QRYLQLSGNH (197 aa)) form the DPCK domain. 13 to 18 (GSGKTT) is a binding site for ATP.

It belongs to the CoaE family.

Its subcellular location is the cytoplasm. The catalysed reaction is 3'-dephospho-CoA + ATP = ADP + CoA + H(+). It functions in the pathway cofactor biosynthesis; coenzyme A biosynthesis; CoA from (R)-pantothenate: step 5/5. Catalyzes the phosphorylation of the 3'-hydroxyl group of dephosphocoenzyme A to form coenzyme A. This chain is Dephospho-CoA kinase, found in Shewanella oneidensis (strain ATCC 700550 / JCM 31522 / CIP 106686 / LMG 19005 / NCIMB 14063 / MR-1).